A 170-amino-acid chain; its full sequence is MAKIGLFYGTQTGVTQTIAESIQQEFGGESIVDLNDIANADASDLNAYDYLIIGCPTWNVGELQSDWEGIYDDLDSVNFQGKKVAYFGAGDQVGYSDNFQDAMGILEEKISSLGSQTVGYWPIEGYDFNESKAVRNNQFVGLAIDEDNQPDLTKNRIKTWVSQLKSEFGL.

The Flavodoxin-like domain occupies 4–165; that stretch reads IGLFYGTQTG…RIKTWVSQLK (162 aa).

It belongs to the flavodoxin family. The cofactor is FMN.

In terms of biological role, low-potential electron donor to a number of redox enzymes. The polypeptide is Flavodoxin (isiB) (Synechococcus elongatus (strain ATCC 33912 / PCC 7942 / FACHB-805) (Anacystis nidulans R2)).